A 544-amino-acid chain; its full sequence is Zinc finger protein 502 (544 aa).

Lysine 43 is covalently cross-linked (Glycyl lysine isopeptide (Lys-Gly) (interchain with G-Cter in SUMO2)). 14 C2H2-type zinc fingers span residues 155-177, 183-205, 211-233, 239-261, 267-289, 295-317, 323-345, 351-373, 379-401, 407-429, 435-457, 463-485, 491-513, and 519-541; these read WKCNECGKTFTQSSSLTQHQRTH, YTCEECGKAFSRSSFLVQHQRIH, YGCEQCGKTFRCRSFLTQHQRIH, YKCNECGNSFRNHSHLTEHQRIH, YKCNRCGKAFNQNTHLIHHQRIH, YICSECGSSFRKHSNLTQHQRIH, HKCDECGKTFQTKANLSQHQRIH, YKCKECGKAFCQSPSLIKHQRIH, YKCKECGKAFTQSTPLTKHQRIH, YKCSECGKAFIQSICLIRHQRSH, YKCNECGKGFNQNTCLTQHMRIH, YKCKECGKAFAHSSSLTEHHRTH, YKCSECEKTFRKYAHLSEHYRIH, and YECIECGKFFRHSSVLFRHQKLH.

This sequence belongs to the krueppel C2H2-type zinc-finger protein family. As to quaternary structure, (Microbial infection) Interacts with human respiratory syncytial virus (HRSV) matrix protein; this interaction probably facilitates viral release.

It is found in the nucleus. In terms of biological role, may be involved in transcriptional regulation. In Homo sapiens (Human), this protein is Zinc finger protein 502 (ZNF502).